A 682-amino-acid chain; its full sequence is Beta-galactosidase (682 aa).

An N-terminal signal peptide occupies residues 1 to 23 (MPGFLVRILPLLLPLLLLGPTRG). Residues 24–28 (LRNAT) constitute a propeptide that is removed on maturation. A glycan (N-linked (GlcNAc...) asparagine) is linked at Asn26. Tyr83, Glu129, and Asn187 together coordinate substrate. Glu188 functions as the Proton donor in the catalytic mechanism. Cys195 and Cys230 form a disulfide bridge. Asn247 is a glycosylation site (N-linked (GlcNAc...) asparagine). The active-site Nucleophile is Glu268. Tyr333 provides a ligand contact to substrate. N-linked (GlcNAc...) asparagine glycans are attached at residues Asn464, Asn498, Asn545, and Asn555. The cysteines at positions 626 and 634 are disulfide-linked.

The protein belongs to the glycosyl hydrolase 35 family. As to quaternary structure, homodimer. May form higher multimers.

It localises to the lysosome. It carries out the reaction Hydrolysis of terminal non-reducing beta-D-galactose residues in beta-D-galactosides.. Cleaves beta-linked terminal galactosyl residues from gangliosides, glycoproteins, and glycosaminoglycans. The protein is Beta-galactosidase (GLB1) of Macaca fascicularis (Crab-eating macaque).